The chain runs to 205 residues: Small ribosomal subunit protein uS4 (205 aa).

Positions 21–47 (GRPKSPFNKRDYGPGQHGQGRKGKPSD) are disordered. One can recognise an S4 RNA-binding domain in the interval 94-154 (RRLDSVVYRA…DKSKQLAIID (61 aa)).

The protein belongs to the universal ribosomal protein uS4 family. As to quaternary structure, part of the 30S ribosomal subunit. Contacts protein S5. The interaction surface between S4 and S5 is involved in control of translational fidelity.

Functionally, one of the primary rRNA binding proteins, it binds directly to 16S rRNA where it nucleates assembly of the body of the 30S subunit. Its function is as follows. With S5 and S12 plays an important role in translational accuracy. The polypeptide is Small ribosomal subunit protein uS4 (Pelagibacter ubique (strain HTCC1062)).